The primary structure comprises 118 residues: Non-specific lipid-transfer protein 2 (118 aa).

The signal sequence occupies residues 1–25 (MAGVMKLACMVLACMIVAGPITANA). 4 cysteine pairs are disulfide-bonded: Cys-29/Cys-76, Cys-39/Cys-53, Cys-54/Cys-100, and Cys-74/Cys-114.

The protein belongs to the plant LTP family.

Functionally, plant non-specific lipid-transfer proteins transfer phospholipids as well as galactolipids across membranes. May play a role in wax or cutin deposition in the cell walls of expanding epidermal cells and certain secretory tissues. The polypeptide is Non-specific lipid-transfer protein 2 (LTP2) (Arabidopsis thaliana (Mouse-ear cress)).